Consider the following 98-residue polypeptide: Large ribosomal subunit protein bL27 (98 aa).

The segment at 1-22 (MAHKKGTGSTRNGRDSNAQRLG) is disordered. The segment covering 7 to 19 (TGSTRNGRDSNAQ) has biased composition (polar residues).

This sequence belongs to the bacterial ribosomal protein bL27 family.

In Nostoc punctiforme (strain ATCC 29133 / PCC 73102), this protein is Large ribosomal subunit protein bL27.